Consider the following 133-residue polypeptide: Nickel-responsive regulator (133 aa).

Ni(2+)-binding residues include histidine 76, histidine 87, histidine 89, and cysteine 95.

It belongs to the transcriptional regulatory CopG/NikR family. In terms of assembly, homotetramer. It depends on Ni(2+) as a cofactor.

Functionally, transcriptional repressor of the nikABCDE operon. Is active in the presence of excessive concentrations of intracellular nickel. This is Nickel-responsive regulator from Escherichia coli O6:K15:H31 (strain 536 / UPEC).